We begin with the raw amino-acid sequence, 323 residues long: Mycothiol acetyltransferase (323 aa).

2 N-acetyltransferase domains span residues 21 to 176 and 173 to 323; these read ELLR…VSLR and VSLR…LTKN. Glutamate 44 contacts 1D-myo-inositol 2-(L-cysteinylamino)-2-deoxy-alpha-D-glucopyranoside. 98 to 100 provides a ligand contact to acetyl-CoA; the sequence is LAV. Residues glutamate 200, lysine 240, and glutamate 253 each coordinate 1D-myo-inositol 2-(L-cysteinylamino)-2-deoxy-alpha-D-glucopyranoside. Acetyl-CoA contacts are provided by residues 257-259 and 264-270; these read VGV and QGLGLGK. Tyrosine 291 contributes to the 1D-myo-inositol 2-(L-cysteinylamino)-2-deoxy-alpha-D-glucopyranoside binding site.

The protein belongs to the acetyltransferase family. MshD subfamily. In terms of assembly, monomer.

It catalyses the reaction 1D-myo-inositol 2-(L-cysteinylamino)-2-deoxy-alpha-D-glucopyranoside + acetyl-CoA = mycothiol + CoA + H(+). In terms of biological role, catalyzes the transfer of acetyl from acetyl-CoA to desacetylmycothiol (Cys-GlcN-Ins) to form mycothiol. The polypeptide is Mycothiol acetyltransferase (Paenarthrobacter aurescens (strain TC1)).